The sequence spans 227 residues: Uracil-DNA glycosylase (227 aa).

Asp68 acts as the Proton acceptor in catalysis.

This sequence belongs to the uracil-DNA glycosylase (UDG) superfamily. UNG family.

The protein localises to the cytoplasm. It carries out the reaction Hydrolyzes single-stranded DNA or mismatched double-stranded DNA and polynucleotides, releasing free uracil.. In terms of biological role, excises uracil residues from the DNA which can arise as a result of misincorporation of dUMP residues by DNA polymerase or due to deamination of cytosine. This chain is Uracil-DNA glycosylase, found in Mycobacterium ulcerans (strain Agy99).